A 1366-amino-acid polypeptide reads, in one-letter code: Serine/threonine-protein kinase RUNKEL (1366 aa).

ATP contacts are provided by residues 10-18 and Lys-33; that span reads IGHGKCSTV. Catalysis depends on Asp-121, which acts as the Proton acceptor. Disordered stretches follow at residues 276–356, 367–386, 398–502, and 524–549; these read TKPC…VNIL, QKEN…NENC, LDFD…DSSK, and PSRK…FSKK. The segment covering 283–302 has biased composition (basic and acidic residues); that stretch reads RNGDRPNKTPPKYREKDRKG. A compositionally biased stretch (polar residues) spans 304–313; it reads SKQNENSIQG. The segment covering 367-376 has biased composition (basic and acidic residues); sequence QKENEKENYR. Residues 398 to 414 show a composition bias toward acidic residues; the sequence is LDFDENNDDEGPDESEG. Basic and acidic residues predominate over residues 422-433; it reads QEERVMSHNENH. The segment covering 438-454 has biased composition (polar residues); it reads VVSSNVPDENSSANETP. HEAT repeat units follow at residues 595 to 633, 638 to 675, 699 to 737, 835 to 872, 878 to 907, 908 to 945, 946 to 986, 992 to 1018, 1019 to 1057, 1072 to 1111, 1279 to 1316, and 1329 to 1366; these read LTNG…HSTS, LANS…YIST, QVSN…QGAY, TEEK…NSRR, FCNA…AFVN, VIAS…RAPV, KTNA…LVEA, DDFR…NGEI, IIRE…LLTE, ISNS…IKIS, TNLP…YACK, and GHDV…RLPR.

This sequence belongs to the protein kinase superfamily. Ser/Thr protein kinase family. As to quaternary structure, binds to microtubules (MT). As to expression, expressed in proliferating tissues of seedlings, lateral roots, young rosette leaves, siliques, flowers, embryos and stems (including apical meristem).

The protein resides in the cytoplasm. The protein localises to the cytoskeleton. Its subcellular location is the phragmoplast. It localises to the spindle. The enzyme catalyses L-seryl-[protein] + ATP = O-phospho-L-seryl-[protein] + ADP + H(+). The catalysed reaction is L-threonyl-[protein] + ATP = O-phospho-L-threonyl-[protein] + ADP + H(+). Functionally, essential protein that regulates phragmoplast microtubule organization during cell plate expansion in cytokinesis during cell division, both somatic and syncytial. Required for endosperm cellularisation. In pollen development, involved in cellularisation during microsporogenesis by regulating radial microtubules (MT) organization in microspore mother cells. Seems to not have kinase activity. The sequence is that of Serine/threonine-protein kinase RUNKEL from Arabidopsis thaliana (Mouse-ear cress).